The primary structure comprises 425 residues: UDP-N-acetylglucosamine 1-carboxyvinyltransferase (425 aa).

23 to 24 provides a ligand contact to phosphoenolpyruvate; sequence KN. R100 lines the UDP-N-acetyl-alpha-D-glucosamine pocket. C124 functions as the Proton donor in the catalytic mechanism. A 2-(S-cysteinyl)pyruvic acid O-phosphothioketal modification is found at C124. Residues D313 and I335 each coordinate UDP-N-acetyl-alpha-D-glucosamine.

This sequence belongs to the EPSP synthase family. MurA subfamily.

Its subcellular location is the cytoplasm. The catalysed reaction is phosphoenolpyruvate + UDP-N-acetyl-alpha-D-glucosamine = UDP-N-acetyl-3-O-(1-carboxyvinyl)-alpha-D-glucosamine + phosphate. The protein operates within cell wall biogenesis; peptidoglycan biosynthesis. In terms of biological role, cell wall formation. Adds enolpyruvyl to UDP-N-acetylglucosamine. This chain is UDP-N-acetylglucosamine 1-carboxyvinyltransferase, found in Wolbachia sp. subsp. Drosophila simulans (strain wRi).